Consider the following 403-residue polypeptide: Acetyl-CoA acetyltransferase IA (403 aa).

C91 (acyl-thioester intermediate) is an active-site residue. Active-site proton acceptor residues include H353 and C383. The short motif at 401–403 (AKL) is the Microbody targeting signal element.

Belongs to the thiolase-like superfamily. Thiolase family. Multimeric.

It localises to the peroxisome. The catalysed reaction is 2 acetyl-CoA = acetoacetyl-CoA + CoA. Its pathway is metabolic intermediate biosynthesis; (R)-mevalonate biosynthesis; (R)-mevalonate from acetyl-CoA: step 1/3. This Candida tropicalis (Yeast) protein is Acetyl-CoA acetyltransferase IA (PACTA).